The chain runs to 198 residues: GTP-binding protein Di-Ras1 (198 aa).

Residues Gly-17–Ser-22, Arg-33–Thr-39, Asp-61–Ser-65, Asn-121–Glu-125, Ala-151, and Ala-151–Lys-152 each bind GTP. The Effector region signature appears at Tyr-36–Tyr-44. The span at Asp-178–Lys-192 shows a compositional bias: basic and acidic residues. The interval Asp-178–Met-198 is disordered. Cys-195 carries the post-translational modification Cysteine methyl ester. A lipid anchor (S-geranylgeranyl cysteine) is attached at Cys-195. The propeptide at Thr-196–Met-198 is removed in mature form.

The protein belongs to the small GTPase superfamily. Di-Ras family. As to expression, highly expressed in heart and brain.

Its subcellular location is the cell membrane. Functionally, displays low GTPase activity and exists predominantly in the GTP-bound form. This is GTP-binding protein Di-Ras1 (DIRAS1) from Homo sapiens (Human).